Consider the following 189-residue polypeptide: Photosystem I assembly protein Ycf4 (189 aa).

2 consecutive transmembrane segments (helical) span residues 29–49 (WATI…SSYL) and 69–89 (LVMG…WLVI).

This sequence belongs to the Ycf4 family.

The protein localises to the cellular thylakoid membrane. Seems to be required for the assembly of the photosystem I complex. The protein is Photosystem I assembly protein Ycf4 of Nostoc punctiforme (strain ATCC 29133 / PCC 73102).